The following is a 98-amino-acid chain: Small ribosomal subunit protein bS20 (98 aa).

The protein belongs to the bacterial ribosomal protein bS20 family.

Functionally, binds directly to 16S ribosomal RNA. The polypeptide is Small ribosomal subunit protein bS20 (Prochlorococcus marinus (strain NATL1A)).